Here is a 150-residue protein sequence, read N- to C-terminus: MADVQERLKKLGASARIGTGKGTPRRKVKRAPARSGADDKKLQQSLKKLNVQPIQAIEEVNMFKSDGNVIHFAAPKVHAAVPSNTFAIYGNGEDKELTELVPGILNQLGPDSLASLRKLAESYQNMQQKKDDDDEIPDLVAGESFENKVE.

2 disordered regions span residues 1-45 (MADV…LQQS) and 123-150 (YQNM…NKVE). Positions 23-32 (TPRRKVKRAP) are enriched in basic residues. The NAC-A/B domain occupies 36-101 (GADDKKLQQS…GEDKELTELV (66 aa)).

Belongs to the NAC-beta family. As to quaternary structure, part of the nascent polypeptide-associated complex (NAC), consisting of EGD2 and EGD1. NAC associates with ribosomes via EGD1.

The protein localises to the cytoplasm. It is found in the nucleus. Functionally, component of the nascent polypeptide-associated complex (NAC), a dynamic component of the ribosomal exit tunnel, protecting the emerging polypeptides from interaction with other cytoplasmic proteins to ensure appropriate nascent protein targeting. The NAC complex also promotes mitochondrial protein import by enhancing productive ribosome interactions with the outer mitochondrial membrane and blocks the inappropriate interaction of ribosomes translating non-secretory nascent polypeptides with translocation sites in the membrane of the endoplasmic reticulum. EGD1 may act as a transcription factor that exert a negative effect on the expression of several genes that are transcribed by RNA polymerase II. This is Nascent polypeptide-associated complex subunit beta (EGD1) from Chaetomium globosum (strain ATCC 6205 / CBS 148.51 / DSM 1962 / NBRC 6347 / NRRL 1970) (Soil fungus).